Consider the following 259-residue polypeptide: Dihydroorotate dehydrogenase B (NAD(+)), electron transfer subunit (259 aa).

An FAD-binding FR-type domain is found at 2-102 (MQKQNMIVVN…LGPLGHGFPV (101 aa)). Residues 53–56 (RPIS), 70–72 (LYR), and 77–78 (GT) each bind FAD. [2Fe-2S] cluster is bound by residues cysteine 221, cysteine 226, cysteine 229, and cysteine 246.

It belongs to the PyrK family. Heterotetramer of 2 PyrK and 2 PyrD type B subunits. [2Fe-2S] cluster is required as a cofactor. FAD serves as cofactor.

Its pathway is pyrimidine metabolism; UMP biosynthesis via de novo pathway; orotate from (S)-dihydroorotate (NAD(+) route): step 1/1. Responsible for channeling the electrons from the oxidation of dihydroorotate from the FMN redox center in the PyrD type B subunit to the ultimate electron acceptor NAD(+). The protein is Dihydroorotate dehydrogenase B (NAD(+)), electron transfer subunit of Bacillus cereus (strain ATCC 14579 / DSM 31 / CCUG 7414 / JCM 2152 / NBRC 15305 / NCIMB 9373 / NCTC 2599 / NRRL B-3711).